The primary structure comprises 254 residues: Geranylgeranylglyceryl phosphate synthase (254 aa).

Mg(2+) contacts are provided by Asp-28 and Ser-57. Residues 176–182, 207–208, and 229–230 each bind sn-glycerol 1-phosphate; these read YLEAGSG, GG, and GT.

It belongs to the GGGP/HepGP synthase family. Group II subfamily. Requires Mg(2+) as cofactor.

It localises to the cytoplasm. It carries out the reaction sn-glycerol 1-phosphate + (2E,6E,10E)-geranylgeranyl diphosphate = sn-3-O-(geranylgeranyl)glycerol 1-phosphate + diphosphate. It functions in the pathway membrane lipid metabolism; glycerophospholipid metabolism. Functionally, prenyltransferase that catalyzes the transfer of the geranylgeranyl moiety of geranylgeranyl diphosphate (GGPP) to the C3 hydroxyl of sn-glycerol-1-phosphate (G1P). This reaction is the first ether-bond-formation step in the biosynthesis of archaeal membrane lipids. The sequence is that of Geranylgeranylglyceryl phosphate synthase from Pyrococcus horikoshii (strain ATCC 700860 / DSM 12428 / JCM 9974 / NBRC 100139 / OT-3).